Consider the following 202-residue polypeptide: Cytochrome c biogenesis ATP-binding export protein CcmA (202 aa).

In terms of domain architecture, ABC transporter spans 3-200 (LAAENLSGER…EGTQELKMGA (198 aa)). Position 35-42 (35-42 (GPNGAGKS)) interacts with ATP.

The protein belongs to the ABC transporter superfamily. CcmA exporter (TC 3.A.1.107) family. As to quaternary structure, the complex is composed of two ATP-binding proteins (CcmA) and two transmembrane proteins (CcmB).

It is found in the cell inner membrane. The enzyme catalyses heme b(in) + ATP + H2O = heme b(out) + ADP + phosphate + H(+). In terms of biological role, part of the ABC transporter complex CcmAB involved in the biogenesis of c-type cytochromes; once thought to export heme, this seems not to be the case, but its exact role is uncertain. Responsible for energy coupling to the transport system. The protein is Cytochrome c biogenesis ATP-binding export protein CcmA of Chelativorans sp. (strain BNC1).